A 154-amino-acid chain; its full sequence is Large-conductance mechanosensitive channel (154 aa).

A run of 2 helical transmembrane segments spans residues 12–32 (GNIV…ALIT) and 71–91 (IVLS…FLVV). The segment at 129 to 154 (NGAPSGRHVDTADLTPTPNHEPRADT) is disordered.

It belongs to the MscL family. In terms of assembly, homopentamer.

It is found in the cell membrane. Functionally, channel that opens in response to stretch forces in the membrane lipid bilayer. May participate in the regulation of osmotic pressure changes within the cell. This Mycobacterium leprae (strain Br4923) protein is Large-conductance mechanosensitive channel.